A 100-amino-acid polypeptide reads, in one-letter code: Putative septation protein SpoVG (100 aa).

It belongs to the SpoVG family.

In terms of biological role, could be involved in septation. This is Putative septation protein SpoVG from Staphylococcus aureus (strain JH1).